We begin with the raw amino-acid sequence, 1351 residues long: Tripartite motif-containing protein 66 (1351 aa).

The segment at 105–150 (MARNCSECKEKRAAHILCTYCNRWLCSSCTEEHRHSPVPGGPFFPR) adopts a B box-type 1; atypical zinc-finger fold. The Zn(2+) site is built by Cys109, Cys112, Cys133, His139, Cys169, His172, Cys192, and His197. The B box-type 2 zinc finger occupies 164–205 (DFTLYCPLHTQEVLKLFCETCDMLTCHSCLVVEHKEHRCRHV). A coiled-coil region spans residues 234 to 304 (AKQIEDRIFE…IMVLNRQFEH (71 aa)). 3 disordered regions span residues 542–608 (FGHH…CSQN), 663–730 (APVQ…VRKH), and 857–895 (CPLQSIPPVSDMQPETGSSSSSGRTSGSLCPRDGADPSL). Over residues 560 to 588 (QLPPPPPPLPHPPPPLPPPPQQPHPPLPP) the composition is skewed to pro residues. Residues 664–676 (PVQSQSQEETLQA) show a composition bias toward polar residues. Over residues 872–884 (TGSSSSSGRTSGS) the composition is skewed to low complexity. The short motif at 995-999 (PYVRL) is the PxVxL motif element. Positions 1067–1098 (TSLAGQRPPEVEGTSPEEHRLIPRTPGAKKGP) are disordered. The PHD-type zinc-finger motif lies at 1105-1152 (EDFCAVCLNGGELLCCDRCPKVFHLSCHVPALLSFPGGEWVCTLCRSL). The Bromo domain maps to 1176–1282 (GLSMYDQKKC…VFFEGWLKEI (107 aa)). The disordered stretch occupies residues 1289–1351 (AQPRQEDSDS…FRLANSISQV (63 aa)).

As to quaternary structure, can form homodimers and heterodimers. Interacts with CBX5, CBX1 and CBX3 via PxVxL motif.

It is found in the nucleus. Functionally, may function as transcription repressor; The repressive effects are mediated, at least in part, by recruitment of deacetylase activity. May play a role as negative regulator of postmeiotic genes acting through CBX3 complex formation and centromere association. This chain is Tripartite motif-containing protein 66 (TRIM66), found in Homo sapiens (Human).